A 435-amino-acid chain; its full sequence is 5-methylthioadenosine/S-adenosylhomocysteine deaminase (435 aa).

Zn(2+) contacts are provided by His65 and His67. Substrate contacts are provided by Glu94, Arg150, and His189. Position 216 (His216) interacts with Zn(2+). Residues Glu219 and Asp304 each contribute to the substrate site. Asp304 contributes to the Zn(2+) binding site.

This sequence belongs to the metallo-dependent hydrolases superfamily. MTA/SAH deaminase family. The cofactor is Zn(2+).

The catalysed reaction is S-adenosyl-L-homocysteine + H2O + H(+) = S-inosyl-L-homocysteine + NH4(+). It catalyses the reaction S-methyl-5'-thioadenosine + H2O + H(+) = S-methyl-5'-thioinosine + NH4(+). In terms of biological role, catalyzes the deamination of 5-methylthioadenosine and S-adenosyl-L-homocysteine into 5-methylthioinosine and S-inosyl-L-homocysteine, respectively. Is also able to deaminate adenosine. This Bacillus cereus (strain AH187) protein is 5-methylthioadenosine/S-adenosylhomocysteine deaminase.